A 376-amino-acid chain; its full sequence is Phytanoyl-CoA hydroxylase-interacting protein-like (376 aa).

Positions 52–161 (VPHNIKISNI…EIIEFCTADY (110 aa)) constitute a Fibronectin type-III domain.

It belongs to the PHYHIP family.

May play a role in the development of the central system. This chain is Phytanoyl-CoA hydroxylase-interacting protein-like (phyhipl), found in Xenopus tropicalis (Western clawed frog).